Consider the following 907-residue polypeptide: Anaphase-promoting complex subunit 2 (907 aa).

2 disordered regions span residues N203–S228 and N790–K838. 2 stretches are compositionally biased toward acidic residues: residues Q214–E226 and E804–E830.

This sequence belongs to the cullin family. The APC/C is composed of at least 13 subunits that stay tightly associated throughout the cell cycle: anapc1, anapc2, anapc3, anapc4, anapc5, anapc6, anapc7, anapc8, anapc10, anapc11, cdc20, cdc26 and cdh1.

It is found in the nucleus. It functions in the pathway protein modification; protein ubiquitination. Functionally, component of the anaphase promoting complex/cyclosome (APC/C), a cell cycle-regulated E3 ubiquitin-protein ligase complex that controls progression through mitosis and the G1 phase of the cell cycle. The sequence is that of Anaphase-promoting complex subunit 2 (anapc2) from Dictyostelium discoideum (Social amoeba).